We begin with the raw amino-acid sequence, 205 residues long: Small ribosomal subunit protein uS4 (205 aa).

One can recognise an S4 RNA-binding domain in the interval 94–172 (SRLDSIVYRM…TTPDYVSFDV (79 aa)).

It belongs to the universal ribosomal protein uS4 family. As to quaternary structure, part of the 30S ribosomal subunit. Contacts protein S5. The interaction surface between S4 and S5 is involved in control of translational fidelity.

Functionally, one of the primary rRNA binding proteins, it binds directly to 16S rRNA where it nucleates assembly of the body of the 30S subunit. In terms of biological role, with S5 and S12 plays an important role in translational accuracy. The sequence is that of Small ribosomal subunit protein uS4 from Rickettsia bellii (strain OSU 85-389).